The sequence spans 590 residues: UvrABC system protein C (590 aa).

The region spanning 11 to 85 is the GIY-YIG domain; it reads ETPGVYLWKR…IKAHRPLYNV (75 aa). The UVR domain maps to 194-229; it reads DGLLQELEAKMREAARRLEFERAAEIRDQMEALRAF.

The protein belongs to the UvrC family. Interacts with UvrB in an incision complex.

The protein resides in the cytoplasm. Functionally, the UvrABC repair system catalyzes the recognition and processing of DNA lesions. UvrC both incises the 5' and 3' sides of the lesion. The N-terminal half is responsible for the 3' incision and the C-terminal half is responsible for the 5' incision. In Thermus thermophilus (strain ATCC 27634 / DSM 579 / HB8), this protein is UvrABC system protein C.